Reading from the N-terminus, the 224-residue chain is Cytidylate kinase (224 aa).

11 to 19 is an ATP binding site; that stretch reads GPAAAGKST.

This sequence belongs to the cytidylate kinase family. Type 1 subfamily.

The protein resides in the cytoplasm. It carries out the reaction CMP + ATP = CDP + ADP. It catalyses the reaction dCMP + ATP = dCDP + ADP. The polypeptide is Cytidylate kinase (Listeria monocytogenes serovar 1/2a (strain ATCC BAA-679 / EGD-e)).